A 104-amino-acid polypeptide reads, in one-letter code: L-rhamnose mutarotase (104 aa).

Residue Y18 participates in substrate binding. H22 serves as the catalytic Proton donor. Substrate contacts are provided by residues Y41 and 76 to 77 (WW).

Belongs to the rhamnose mutarotase family. Homodimer.

Its subcellular location is the cytoplasm. The catalysed reaction is alpha-L-rhamnose = beta-L-rhamnose. It participates in carbohydrate metabolism; L-rhamnose metabolism. Involved in the anomeric conversion of L-rhamnose. The sequence is that of L-rhamnose mutarotase from Escherichia coli O1:K1 / APEC.